The primary structure comprises 175 residues: Chromobox protein homolog hpl-2 (175 aa).

Residues 19–78 (FMVEKVLDKRTGKAGRDEFLIQWQGFPESDSSWEPRENLQCVEMLDEFEREFSKREKPIR) enclose the Chromo domain. Residues 71-109 (SKREKPIRKRHSQKPEPSEDQADPEEDKDEKKETNQNDK) are disordered. The span at 88 to 98 (SEDQADPEEDK) shows a compositional bias: acidic residues. Residues 99–109 (DEKKETNQNDK) are compositionally biased toward basic and acidic residues. Positions 115 to 172 (KQLKCIVGLTKGPGELHFLCKFSDDTARLLPAKEVNSRYPSQVIRYYESKLTIQDPKA) constitute a Chromo 2; shadow subtype domain.

Interacts with histone H3 when di-, or tri-methylated at 'Lys-27' (H3K27me2/me3), or tri-methylated at 'Lys-9' (H3K9me3). Interacts with Tar DNA-binding protein homolog tdp-1; interaction may maintain localization of hpl-2 to gene bodies. Interacts with histone H1 his-24, probably via interaction with hpl-1. Interacts with chromobox protein homolog hpl-1. As to quaternary structure, may form homodimers. Interacts (via chromo (shadow subtype) domain) with zinc finger protein lin-13 (via PLVPV motif); the interaction is direct and influences localization of hpl-2 to nuclear foci.

The protein localises to the nucleus. It is found in the chromosome. Functionally, seems to be involved in transcriptional silencing in heterochromatin-like complexes. Probably does not act as global transcriptional repressor, instead targeting a subset of genes. Involved in RNA processing mediated by Tar DNA-binding protein homolog tdp-1. Plays a role in linking epigenetic regulation with the innate immune response. Involved in the endoplasmic reticulum (ER) stress response via modulation of the unfolded protein response (UPR), acting mainly through the IRE1-XBP1 pathway and perhaps, to a lesser extent, through the autophagy pathway. May act in a common pathway with retinoblastoma-like protein homolog lin-35 and zinc finger protein lin-13 to influence the ER stress response in the intestine. Plays a role in the formation of the vulva and in fertility, acting together with a CoREST-like complex, and chromobox protein homolog hpl-1. Acting in concert with hpl-1 and histone H1 protein his-24, involved in reproduction, somatic gonad development, male tail development and vulval cell fate specification; perhaps as a result of modulating expression of Hox genes mab-5 and egl-5. In vulval cell fate specification may act by repressing transcription, of EGF family gene lin-3 in hypodermal hyp7, and of homeobox lin-39 in vulval precursor cells (VPC). Role in growth and somatic gonad development is antagonized by histone-lysine N-methyltransferase set-2/SET1. Required for larval development, acting redundantly with hpl-1. Plays a role in regulation of the developmentally arrested larval state known as dauer, longevity, and lipid metabolism. The chain is Chromobox protein homolog hpl-2 from Caenorhabditis elegans.